Consider the following 948-residue polypeptide: Phosphoenolpyruvate carboxylase (948 aa).

Active-site residues include H138 and K610.

Belongs to the PEPCase type 1 family. Mg(2+) serves as cofactor.

It carries out the reaction oxaloacetate + phosphate = phosphoenolpyruvate + hydrogencarbonate. Forms oxaloacetate, a four-carbon dicarboxylic acid source for the tricarboxylic acid cycle. This Streptococcus sanguinis (strain SK36) protein is Phosphoenolpyruvate carboxylase.